The chain runs to 361 residues: dTDP-glucose 4,6-dehydratase (361 aa).

Residues phenylalanine 11–isoleucine 12, aspartate 32–threonine 35, aspartate 58–isoleucine 59, leucine 80–serine 84, and threonine 99 contribute to the NAD(+) site. Residue serine 84 participates in substrate binding. Threonine 133 serves as a coordination point for substrate. The active-site Proton donor is the aspartate 134. Residues glutamate 135 and tyrosine 167 each act as proton acceptor in the active site. Tyrosine 167 to lysine 171 serves as a coordination point for NAD(+). Asparagine 196 serves as a coordination point for substrate. Asparagine 197 is an NAD(+) binding site. Residues lysine 206–leucine 207, proline 222–tyrosine 224, arginine 231, asparagine 266, and aspartate 296–histidine 300 contribute to the substrate site.

It belongs to the NAD(P)-dependent epimerase/dehydratase family. dTDP-glucose dehydratase subfamily. In terms of assembly, homodimer. NAD(+) serves as cofactor.

It carries out the reaction dTDP-alpha-D-glucose = dTDP-4-dehydro-6-deoxy-alpha-D-glucose + H2O. It functions in the pathway carbohydrate biosynthesis; dTDP-L-rhamnose biosynthesis. It participates in bacterial outer membrane biogenesis; LPS O-antigen biosynthesis. In terms of biological role, catalyzes the dehydration of dTDP-D-glucose to form dTDP-6-deoxy-D-xylo-4-hexulose via a three-step process involving oxidation, dehydration and reduction. The chain is dTDP-glucose 4,6-dehydratase (rfbB) from Escherichia coli.